A 97-amino-acid polypeptide reads, in one-letter code: Protein RnfH (97 aa).

This sequence belongs to the UPF0125 (RnfH) family.

In Proteus mirabilis (strain HI4320), this protein is Protein RnfH.